The sequence spans 417 residues: Glutamyl-tRNA reductase (417 aa).

Residues 49 to 52 (TCNR), serine 105, 110 to 112 (ETQ), and glutamine 116 each bind substrate. Catalysis depends on cysteine 50, which acts as the Nucleophile. 185 to 190 (GAGEMI) serves as a coordination point for NADP(+).

It belongs to the glutamyl-tRNA reductase family. As to quaternary structure, homodimer.

It carries out the reaction (S)-4-amino-5-oxopentanoate + tRNA(Glu) + NADP(+) = L-glutamyl-tRNA(Glu) + NADPH + H(+). It participates in porphyrin-containing compound metabolism; protoporphyrin-IX biosynthesis; 5-aminolevulinate from L-glutamyl-tRNA(Glu): step 1/2. Catalyzes the NADPH-dependent reduction of glutamyl-tRNA(Glu) to glutamate 1-semialdehyde (GSA). The polypeptide is Glutamyl-tRNA reductase (Chromobacterium violaceum (strain ATCC 12472 / DSM 30191 / JCM 1249 / CCUG 213 / NBRC 12614 / NCIMB 9131 / NCTC 9757 / MK)).